The following is a 446-amino-acid chain: Adenylosuccinate synthetase (446 aa).

Residues 20-26 (GDEGKGK) and 48-50 (GHT) each bind GTP. The active-site Proton acceptor is aspartate 21. Mg(2+)-binding residues include aspartate 21 and glycine 48. IMP-binding positions include 21–24 (DEGK), 46–49 (NAGH), threonine 137, arginine 151, glutamine 232, threonine 247, and arginine 319. Histidine 49 serves as the catalytic Proton donor. Position 315 to 321 (315 to 321 (SVTGRPR)) interacts with substrate. GTP-binding positions include arginine 321, 347–349 (KLD), and 429–431 (STG).

Belongs to the adenylosuccinate synthetase family. In terms of assembly, homodimer. It depends on Mg(2+) as a cofactor.

It localises to the cytoplasm. The enzyme catalyses IMP + L-aspartate + GTP = N(6)-(1,2-dicarboxyethyl)-AMP + GDP + phosphate + 2 H(+). The protein operates within purine metabolism; AMP biosynthesis via de novo pathway; AMP from IMP: step 1/2. In terms of biological role, plays an important role in the de novo pathway of purine nucleotide biosynthesis. Catalyzes the first committed step in the biosynthesis of AMP from IMP. This chain is Adenylosuccinate synthetase, found in Ralstonia pickettii (strain 12J).